Consider the following 468-residue polypeptide: Cysteine--tRNA ligase (468 aa).

Residue C27 participates in Zn(2+) binding. The 'HIGH' region signature appears at 29 to 39 (PTVYDDAHLGH). C204, H234, and E238 together coordinate Zn(2+). A 'KMSKS' region motif is present at residues 266–270 (KMSKS). Position 269 (K269) interacts with ATP.

The protein belongs to the class-I aminoacyl-tRNA synthetase family. As to quaternary structure, monomer. Zn(2+) is required as a cofactor.

The protein localises to the cytoplasm. The enzyme catalyses tRNA(Cys) + L-cysteine + ATP = L-cysteinyl-tRNA(Cys) + AMP + diphosphate. The protein is Cysteine--tRNA ligase of Campylobacter hominis (strain ATCC BAA-381 / DSM 21671 / CCUG 45161 / LMG 19568 / NCTC 13146 / CH001A).